A 247-amino-acid polypeptide reads, in one-letter code: uncharacterized protein (247 aa).

Residues 200 to 225 are a coiled coil; the sequence is SGKYSELKTKVNDIENDLRTLSSNTN.

This is an uncharacterized protein from Acanthamoeba polyphaga (Amoeba).